The chain runs to 576 residues: Septation ring formation regulator EzrA (576 aa).

Topologically, residues 1 to 7 (MSSTVII) are extracellular. A helical membrane pass occupies residues 8 to 26 (LIVVLLVILVAFYAFAILM). At 27-576 (RKKTEDRILA…FKNKPTPDYL (550 aa)) the chain is on the cytoplasmic side. 2 coiled-coil regions span residues 105–134 (RARE…VAQL) and 277–301 (EQFE…LYAI).

Belongs to the EzrA family.

The protein localises to the cell membrane. Negative regulator of FtsZ ring formation; modulates the frequency and position of FtsZ ring formation. Inhibits FtsZ ring formation at polar sites. Interacts either with FtsZ or with one of its binding partners to promote depolymerization. The chain is Septation ring formation regulator EzrA from Lactococcus lactis subsp. lactis (strain IL1403) (Streptococcus lactis).